The sequence spans 234 residues: Glutathione S-transferase 1 (234 aa).

The GST N-terminal domain maps to 3–90 (LPIIKVHWLD…YVLQHFDHSH (88 aa)). The GST C-terminal domain occupies 96–234 (DADIADQINY…EKARALGSNF (139 aa)).

It belongs to the GST superfamily. As to quaternary structure, homodimer.

It is found in the endoplasmic reticulum membrane. The enzyme catalyses RX + glutathione = an S-substituted glutathione + a halide anion + H(+). This is Glutathione S-transferase 1 (GTT1) from Saccharomyces cerevisiae (strain ATCC 204508 / S288c) (Baker's yeast).